Consider the following 294-residue polypeptide: Tissue factor (294 aa).

An N-terminal signal peptide occupies residues methionine 1–glycine 28. The Extracellular segment spans residues alanine 29–glutamate 251. Residues asparagine 37 and asparagine 57 are each glycosylated (N-linked (GlcNAc...) asparagine). The cysteines at positions 75 and 83 are disulfide-linked. N-linked (GlcNAc...) asparagine glycans are attached at residues asparagine 169 and asparagine 200. Cysteine 218 and cysteine 241 are disulfide-bonded. Positions tryptophan 245 to serine 247 match the WKS motif motif. The chain crosses the membrane as a helical span at residues threonine 252–leucine 274. Residue cysteine 275 is the site of S-palmitoyl cysteine attachment. Residues cysteine 275 to alanine 294 lie on the Cytoplasmic side of the membrane.

This sequence belongs to the tissue factor family. In terms of assembly, interacts with HSPE; the interaction, inhibited by heparin, promotes the generation of activated factor X and activates coagulation in the presence of activated factor VII.

The protein localises to the membrane. Functionally, initiates blood coagulation by forming a complex with circulating factor VII or VIIa. The [TF:VIIa] complex activates factors IX or X by specific limited proteolysis. TF plays a role in normal hemostasis by initiating the cell-surface assembly and propagation of the coagulation protease cascade. The protein is Tissue factor (F3) of Mus musculus (Mouse).